A 192-amino-acid chain; its full sequence is Probable GTP-binding protein EngB (192 aa).

The EngB-type G domain occupies 22-192 (QIPEIVFAGR…LLAHLAQYIR (171 aa)). Residues 30-37 (GRSNVGKS), 57-61 (GKTRL), 75-78 (DLPG), 142-145 (TKDD), and 172-174 (YSS) contribute to the GTP site. Mg(2+) contacts are provided by serine 37 and threonine 59.

It belongs to the TRAFAC class TrmE-Era-EngA-EngB-Septin-like GTPase superfamily. EngB GTPase family. Requires Mg(2+) as cofactor.

Necessary for normal cell division and for the maintenance of normal septation. This chain is Probable GTP-binding protein EngB, found in Chlorobium phaeobacteroides (strain DSM 266 / SMG 266 / 2430).